The following is a 134-amino-acid chain: MIENLKTNYTGTGHRKQAIARVYLTPGSGLIEVNGIKGELYFQYSPNYIRLSKSPLTTLGLENKYNIYVNAHGGGLTGQVEAIRLGLARALCKLNPENRTALKFEGYLTRDSRITERKKYGLKKARKAPQFSKR.

It belongs to the universal ribosomal protein uS9 family.

The protein localises to the plastid. It is found in the chloroplast. The sequence is that of Small ribosomal subunit protein uS9c (rps9) from Guillardia theta (Cryptophyte).